The chain runs to 317 residues: Coproporphyrinogen-III oxidase, aerobic 1 (317 aa).

The tract at residues 38–47 (VLRDGAIFEQ) is important for dimerization. Residue serine 82 coordinates substrate. The active-site Proton donor is the histidine 96. Substrate is bound by residues 98–100 (NYR) and 269–274 (NGRTES). The interval 251–286 (YVEFNLVYDRGTIFGLQTNGRTESILMSLPPLVRWE) is important for dimerization.

Belongs to the aerobic coproporphyrinogen-III oxidase family. As to quaternary structure, homodimer.

The protein localises to the cytoplasm. The catalysed reaction is coproporphyrinogen III + O2 + 2 H(+) = protoporphyrinogen IX + 2 CO2 + 2 H2O. The protein operates within porphyrin-containing compound metabolism; protoporphyrin-IX biosynthesis; protoporphyrinogen-IX from coproporphyrinogen-III (O2 route): step 1/1. In terms of biological role, key enzyme in heme biosynthesis. Catalyzes the oxidative decarboxylation of propionic acid side chains of rings A and B of coproporphyrinogen III. This chain is Coproporphyrinogen-III oxidase, aerobic 1, found in Nostoc sp. (strain PCC 7120 / SAG 25.82 / UTEX 2576).